A 156-amino-acid chain; its full sequence is 2-C-methyl-D-erythritol 2,4-cyclodiphosphate synthase (156 aa).

A divalent metal cation is bound by residues Asp8 and His10. 4-CDP-2-C-methyl-D-erythritol 2-phosphate-binding positions include 8–10 (DVH) and 34–35 (HS). His42 serves as a coordination point for a divalent metal cation. 4-CDP-2-C-methyl-D-erythritol 2-phosphate-binding positions include 56–58 (DIG), 61–65 (FPDTD), 100–106 (AQRPKMA), 132–135 (TTEE), and Phe139.

It belongs to the IspF family. In terms of assembly, homotrimer. A divalent metal cation serves as cofactor.

The catalysed reaction is 4-CDP-2-C-methyl-D-erythritol 2-phosphate = 2-C-methyl-D-erythritol 2,4-cyclic diphosphate + CMP. Its pathway is isoprenoid biosynthesis; isopentenyl diphosphate biosynthesis via DXP pathway; isopentenyl diphosphate from 1-deoxy-D-xylulose 5-phosphate: step 4/6. Its function is as follows. Involved in the biosynthesis of isopentenyl diphosphate (IPP) and dimethylallyl diphosphate (DMAPP), two major building blocks of isoprenoid compounds. Catalyzes the conversion of 4-diphosphocytidyl-2-C-methyl-D-erythritol 2-phosphate (CDP-ME2P) to 2-C-methyl-D-erythritol 2,4-cyclodiphosphate (ME-CPP) with a corresponding release of cytidine 5-monophosphate (CMP). This chain is 2-C-methyl-D-erythritol 2,4-cyclodiphosphate synthase, found in Clostridium perfringens (strain ATCC 13124 / DSM 756 / JCM 1290 / NCIMB 6125 / NCTC 8237 / Type A).